Here is a 151-residue protein sequence, read N- to C-terminus: Lipoprotein signal peptidase (151 aa).

Transmembrane regions (helical) follow at residues 54–74 (GQMW…IYLI) and 83–103 (LLKI…IDRL). Catalysis depends on residues Asp110 and Asp125. Residues 120 to 140 (IFNIADSALTIGVGLFLLNIL) traverse the membrane as a helical segment.

The protein belongs to the peptidase A8 family.

Its subcellular location is the cell membrane. The catalysed reaction is Release of signal peptides from bacterial membrane prolipoproteins. Hydrolyzes -Xaa-Yaa-Zaa-|-(S,diacylglyceryl)Cys-, in which Xaa is hydrophobic (preferably Leu), and Yaa (Ala or Ser) and Zaa (Gly or Ala) have small, neutral side chains.. The protein operates within protein modification; lipoprotein biosynthesis (signal peptide cleavage). Functionally, this protein specifically catalyzes the removal of signal peptides from prolipoproteins. The protein is Lipoprotein signal peptidase of Shouchella clausii (strain KSM-K16) (Alkalihalobacillus clausii).